Here is a 75-residue protein sequence, read N- to C-terminus: UPF0057 membrane protein At2g24040 (75 aa).

The next 2 helical transmembrane spans lie at 4–24 (SCEL…GVCL) and 33–53 (FFIC…YAIY).

This sequence belongs to the UPF0057 (PMP3) family.

It localises to the membrane. The protein is UPF0057 membrane protein At2g24040 of Arabidopsis thaliana (Mouse-ear cress).